A 51-amino-acid polypeptide reads, in one-letter code: Defensin (51 aa).

Cystine bridges form between cysteine 3/cysteine 31, cysteine 17/cysteine 36, and cysteine 21/cysteine 38. A Phenylalanine amide modification is found at phenylalanine 51.

Its subcellular location is the secreted. In terms of biological role, antibacterial peptide against Gram-positive and Gram-negative bacteria and fungi. This Bombus pascuorum (Common carder bumblebee) protein is Defensin.